The chain runs to 476 residues: UDP-N-acetylmuramate--L-alanine ligase (476 aa).

125–131 (GTHGKTT) is a binding site for ATP.

This sequence belongs to the MurCDEF family.

It localises to the cytoplasm. The catalysed reaction is UDP-N-acetyl-alpha-D-muramate + L-alanine + ATP = UDP-N-acetyl-alpha-D-muramoyl-L-alanine + ADP + phosphate + H(+). The protein operates within cell wall biogenesis; peptidoglycan biosynthesis. Cell wall formation. The polypeptide is UDP-N-acetylmuramate--L-alanine ligase (Histophilus somni (strain 129Pt) (Haemophilus somnus)).